We begin with the raw amino-acid sequence, 81 residues long: uncharacterized protein (81 aa).

2 consecutive transmembrane segments (helical) span residues 27–47 and 54–74; these read ASLL…LNLT and IFGA…IFIM.

Its subcellular location is the cell membrane. This is an uncharacterized protein from Bacillus subtilis (strain 168).